Here is a 426-residue protein sequence, read N- to C-terminus: Spermatogenesis-associated protein 2-like protein (426 aa).

Disordered stretches follow at residues 204-223 (AQDEEPPPLPPRGTPATYGA), 234-256 (DESSEASLYGEPSPGLDSPPVEL), 269-300 (LWGSGGQPWEPPADDMHRASSPPYGALEEELE), and 316-347 (SRSGDLAPPESPSSPGQASPRHRQAEAAASSA). Phosphoserine occurs at positions 318 and 326.

Belongs to the SPATA2 family.

The protein is Spermatogenesis-associated protein 2-like protein of Mus musculus (Mouse).